A 265-amino-acid chain; its full sequence is UDP-N-acetylenolpyruvoylglucosamine reductase (265 aa).

The 155-residue stretch at 15–169 (GVGGPAELWT…TRVRLKLKER (155 aa)) folds into the FAD-binding PCMH-type domain. Arginine 149 is a catalytic residue. The disordered stretch occupies residues 182-203 (DRARKGQPKRKSAGCAFKNPPG). Cysteine 196 functions as the Proton donor in the catalytic mechanism.

This sequence belongs to the MurB family. Requires FAD as cofactor.

The protein localises to the cytoplasm. The enzyme catalyses UDP-N-acetyl-alpha-D-muramate + NADP(+) = UDP-N-acetyl-3-O-(1-carboxyvinyl)-alpha-D-glucosamine + NADPH + H(+). It participates in cell wall biogenesis; peptidoglycan biosynthesis. Cell wall formation. The protein is UDP-N-acetylenolpyruvoylglucosamine reductase of Thermus thermophilus (strain ATCC 27634 / DSM 579 / HB8).